The sequence spans 544 residues: Serine/threonine-protein kinase PAK 3 (544 aa).

Residues 1–73 (MSDSLDNEEK…EKERPEISLP (73 aa)) form a disordered region. Phosphoserine occurs at positions 2 and 4. The segment covering 18–32 (MNSNNRDSSALNHSS) has biased composition (polar residues). Serine 50 carries the post-translational modification Phosphoserine; by autocatalysis. Basic and acidic residues predominate over residues 63 to 73 (KEKERPEISLP). The segment at 65-108 (KERPEISLPSDFEHTIHVGFDAVTGEFTGIPEQWARLLQTSNIT) is GTPase-binding. Residues 65–135 (KERPEISLPS…YDSKETVNNQ (71 aa)) form an autoregulatory region region. The 14-residue stretch at 70-83 (ISLPSDFEHTIHVG) folds into the CRIB domain. A linker region spans residues 84 to 267 (FDAVTGEFTG…IVSVGDPKKK (184 aa)). At serine 139 the chain carries Phosphoserine; by autocatalysis. 2 disordered regions span residues 156-197 (SNTK…RPEH) and 213-248 (PAAPNKEATPPSAENANSSTLYRNTDRQRKKSKMTD). A Phosphoserine modification is found at serine 171. The segment covering 171 to 186 (SEEEDEEEEEEEDDNE) has biased composition (acidic residues). Polar residues predominate over residues 224–235 (SAENANSSTLYR). The region spanning 268 to 519 (YTRFEKIGQG…AKELLQHPFL (252 aa)) is the Protein kinase domain. ATP is bound by residues 274–282 (IGQGASGTV) and lysine 297. Aspartate 387 acts as the Proton acceptor in catalysis. Threonine 421 carries the phosphothreonine; by autocatalysis modification.

Belongs to the protein kinase superfamily. STE Ser/Thr protein kinase family. STE20 subfamily. Interacts tightly with GTP-bound but not GDP-bound CDC42/p21 and RAC1. Shows highly specific binding to the SH3 domains of phospholipase C-gamma and of adapter protein NCK. Interacts with the C-terminal of APP. Interacts with ARHGEF6 and ARHGEF7. Interacts with GIT1 and GIT2. Mg(2+) serves as cofactor. In terms of processing, autophosphorylated when activated by CDC42/p21. Neddylated. In terms of tissue distribution, detected at high levels in the brain and at low levels in the testis.

The protein localises to the cytoplasm. The catalysed reaction is L-seryl-[protein] + ATP = O-phospho-L-seryl-[protein] + ADP + H(+). It carries out the reaction L-threonyl-[protein] + ATP = O-phospho-L-threonyl-[protein] + ADP + H(+). With respect to regulation, activated by binding small G proteins. Binding of GTP-bound CDC42 or RAC1 to the autoregulatory region releases monomers from the autoinhibited dimer, enables phosphorylation of Thr-421 and allows the kinase domain to adopt an active structure. Functionally, serine/threonine protein kinase that plays a role in a variety of different signaling pathways including cytoskeleton regulation, cell migration, or cell cycle regulation. Plays a role in dendrite spine morphogenesis as well as synapse formation and plasticity. Acts as a downstream effector of the small GTPases CDC42 and RAC1. Activation by the binding of active CDC42 and RAC1 results in a conformational change and a subsequent autophosphorylation on several serine and/or threonine residues. Phosphorylates MAPK4 and MAPK6 and activates the downstream target MAPKAPK5, a regulator of F-actin polymerization and cell migration. Additionally, phosphorylates TNNI3/troponin I to modulate calcium sensitivity and relaxation kinetics of thin myofilaments. May also be involved in early neuronal development. In hippocampal neurons, necessary for the formation of dendritic spines and excitatory synapses; this function is dependent on kinase activity and may be exerted by the regulation of actomyosin contractility through the phosphorylation of myosin II regulatory light chain (MLC). The sequence is that of Serine/threonine-protein kinase PAK 3 (Pak3) from Rattus norvegicus (Rat).